The primary structure comprises 438 residues: UDP-N-acetylmuramoylalanine--D-glutamate ligase (438 aa).

Residue 112–118 (GSNGKST) coordinates ATP.

This sequence belongs to the MurCDEF family.

The protein localises to the cytoplasm. The catalysed reaction is UDP-N-acetyl-alpha-D-muramoyl-L-alanine + D-glutamate + ATP = UDP-N-acetyl-alpha-D-muramoyl-L-alanyl-D-glutamate + ADP + phosphate + H(+). It functions in the pathway cell wall biogenesis; peptidoglycan biosynthesis. Functionally, cell wall formation. Catalyzes the addition of glutamate to the nucleotide precursor UDP-N-acetylmuramoyl-L-alanine (UMA). In Shigella sonnei (strain Ss046), this protein is UDP-N-acetylmuramoylalanine--D-glutamate ligase.